Consider the following 355-residue polypeptide: Protein RecA (355 aa).

Position 67–74 (67–74) interacts with ATP; that stretch reads GPESSGKT.

It belongs to the RecA family.

The protein resides in the cytoplasm. Its function is as follows. Can catalyze the hydrolysis of ATP in the presence of single-stranded DNA, the ATP-dependent uptake of single-stranded DNA by duplex DNA, and the ATP-dependent hybridization of homologous single-stranded DNAs. It interacts with LexA causing its activation and leading to its autocatalytic cleavage. The polypeptide is Protein RecA (Shewanella piezotolerans (strain WP3 / JCM 13877)).